Here is a 1705-residue protein sequence, read N- to C-terminus: ALK tyrosine kinase receptor (1705 aa).

A signal peptide spans 1 to 21 (MIARILYFFLWSAAFLPELQC). Residues 22–1035 (ASQRTADALT…SLSHLALGLS (1014 aa)) lie on the Extracellular side of the membrane. N-linked (GlcNAc...) asparagine glycans are attached at residues N40 and N48. The interval 54–76 (RIKRKTLSVDFAVPSLLRYYLAL) is heparin-binding region. N-linked (GlcNAc...) asparagine glycosylation is found at N124, N259, N334, N434, N442, N458, N484, N578, N590, and N635. Residues 486–644 (SYCSFGREDC…NFTLSMECFL (159 aa)) enclose the MAM domain. C694 and C707 are joined by a disulfide. N717 carries N-linked (GlcNAc...) asparagine glycosylation. The cysteines at positions 788 and 799 are disulfide-linked. N-linked (GlcNAc...) asparagine glycans are attached at residues N808 and N881. Residues 842-892 (GGGRGYSSQSETPEEVMDRDPSIPGRNGKSGTAGGGGGWNDSAPVPQGGRP) are disordered. Cysteines 903 and 921 form a disulfide. The N-linked (GlcNAc...) asparagine glycan is linked to N979. Intrachain disulfides connect C980/C988 and C983/C997. The tract at residues 980 to 1016 (CSHCESGDCHETSEGMVCYCDEELTLAPDGVSCINST) is EGF-like. A glycan (N-linked (GlcNAc...) asparagine) is linked at N1014. A helical membrane pass occupies residues 1036–1056 (VGTSALIAALLLAVSGVMIMY). Over 1057–1705 (RRKHTELQSI…KMEGHNATVL (649 aa)) the chain is Cytoplasmic. The region spanning 1113-1389 (ISLTRGLGHG…IDYCLQDPDV (277 aa)) is the Protein kinase domain. ATP contacts are provided by residues 1119 to 1127 (LGHGAFGEV) and K1147. D1246 acts as the Proton acceptor in catalysis. 5 disordered regions span residues 1395-1499 (PVEY…GHVN), 1505-1524 (AHSS…WNPT), 1532-1557 (QQQK…GQEQ), 1588-1613 (QQQQ…PAPT), and 1646-1681 (GLPM…DSRP). Residues 1484–1493 (KPSSTTSNAQ) show a composition bias toward polar residues. Composition is skewed to low complexity over residues 1532 to 1544 (QQQK…AQRQ) and 1588 to 1602 (QQQQ…LCRP). Positions 1603-1613 (LLPPPPPPAPT) are enriched in pro residues.

This sequence belongs to the protein kinase superfamily. Tyr protein kinase family. Insulin receptor subfamily. As to quaternary structure, homodimer; homodimerizes upon binding to alkal ligands (alkal1, alkal2a or alkal2b). In terms of tissue distribution, highly expressed in the developing central nervous system: highly expressed in brain, with much lower expression in heart, caudal fin and testis.

Its subcellular location is the cell membrane. The catalysed reaction is L-tyrosyl-[protein] + ATP = O-phospho-L-tyrosyl-[protein] + ADP + H(+). Its activity is regulated as follows. Inhibited by ALK inhibitor TAE684. Its function is as follows. Receptor tyrosine kinase required for neurogenesis in the developing central nervous system. Following activation by alkal ligands (alkal1, alkal2a or alkal2b) at the cell surface, transduces an extracellular signal into an intracellular response. Ligand-binding to the extracellular domain induces tyrosine kinase activation, resulting in the activation of the mitogen-activated protein kinase (MAPK) pathway. Phosphorylates almost exclusively at the first tyrosine of the Y-x-x-x-Y-Y motif. The polypeptide is ALK tyrosine kinase receptor (Danio rerio (Zebrafish)).